The sequence spans 1574 residues: Synaptojanin-1 (1574 aa).

The region spanning 119 to 442 (VRKVLNSGNF…GDSISKIYAG (324 aa)) is the SAC domain. 2 positions are modified to phosphoserine: S820 and S830. The RRM domain maps to 894–971 (GTVLVSIKSS…RTITITLKSP (78 aa)). The segment covering 1029–1054 (HLQPSSSSGLGTSPSSSPRTSPCQSP) has biased composition (low complexity). The disordered stretch occupies residues 1029 to 1327 (HLQPSSSSGL…GVKQEPTLKS (299 aa)). Residue S1053 is modified to Phosphoserine. A compositionally biased stretch (polar residues) spans 1080 to 1100 (SSQGSPVDTQPAAQKDSSQTL). Pro residues predominate over residues 1105-1127 (PPPPRPVAPPARPAPPQRPPPPS). Phosphoserine occurs at positions 1147 and 1175. Residue R1198 is modified to Omega-N-methylarginine. T1217 bears the Phosphothreonine mark. Over residues 1268 to 1287 (TMPPSGPQPNLETPPQPPPR) the composition is skewed to pro residues. A compositionally biased stretch (low complexity) spans 1288-1307 (SRSSQSLPSDSSPQLQQEQP). Residues S1290 and S1350 each carry the phosphoserine modification. T1354 carries the phosphothreonine modification. Disordered stretches follow at residues 1363–1507 (LPSA…SVCP) and 1532–1574 (LPAR…FTER). Composition is skewed to polar residues over residues 1364–1379 (PSAS…SVSC), 1393–1402 (QESMGSSANP), 1424–1436 (RVQS…TSWL), and 1472–1484 (DLQS…TSNP). The 3 X 3 AA repeats of N-P-F stretch occupies residues 1403–1425 (FPSLPCRNPFTDRTAAPGNPFRV). Residues 1535 to 1548 (RRPPPPPPPVPLLP) show a composition bias toward pro residues. Positions 1549–1563 (PGTTSSAGPSTTLPS) are enriched in low complexity. Over residues 1565 to 1574 (APSTLDFTER) the composition is skewed to polar residues.

This sequence belongs to the synaptojanin family. It in the central section; belongs to the inositol 1,4,5-trisphosphate 5-phosphatase family. Interacts with ASH/GRB2. Interacts with PACSIN1, PACSIN2 and PACSIN3. Interacts with AMPH, SH3GL1, SH3GL2 and SH3GL3. Interacts with MYO1E (via SH3 domain). Interacts with BIN1 and DNM1. Interacts with EPS15.

It is found in the cytoplasm. The protein localises to the perinuclear region. It catalyses the reaction a 1,2-diacyl-sn-glycero-3-phospho-(1D-myo-inositol-4,5-bisphosphate) + H2O = a 1,2-diacyl-sn-glycero-3-phospho-(1D-myo-inositol 4-phosphate) + phosphate. In terms of biological role, phosphatase that acts on various phosphoinositides, including phosphatidylinositol 4-phosphate, phosphatidylinositol (4,5)-bisphosphate and phosphatidylinositol (3,4,5)-trisphosphate. Has a role in clathrin-mediated endocytosis. Hydrolyzes PIP2 bound to actin regulatory proteins resulting in the rearrangement of actin filaments downstream of tyrosine kinase and ASH/GRB2. This chain is Synaptojanin-1 (Synj1), found in Mus musculus (Mouse).